Consider the following 89-residue polypeptide: Small ribosomal subunit protein uS15 (89 aa).

The segment covering 1–21 (MALTTEEKKQVLSEYGLHETD) has biased composition (basic and acidic residues). Positions 1 to 24 (MALTTEEKKQVLSEYGLHETDTGS) are disordered.

Belongs to the universal ribosomal protein uS15 family. As to quaternary structure, part of the 30S ribosomal subunit. Forms a bridge to the 50S subunit in the 70S ribosome, contacting the 23S rRNA.

Its function is as follows. One of the primary rRNA binding proteins, it binds directly to 16S rRNA where it helps nucleate assembly of the platform of the 30S subunit by binding and bridging several RNA helices of the 16S rRNA. Forms an intersubunit bridge (bridge B4) with the 23S rRNA of the 50S subunit in the ribosome. This chain is Small ribosomal subunit protein uS15, found in Rhodococcus jostii (strain RHA1).